The chain runs to 205 residues: Holliday junction branch migration complex subunit RuvA (205 aa).

The domain I stretch occupies residues 1–64; the sequence is MIGRLRGIVL…EDAQLLYGFN (64 aa). The tract at residues 65–143 is domain II; it reads DKQERALFRE…GLNGDLFNQS (79 aa). A flexible linker region spans residues 144–156; the sequence is SDINLPATAKQTT. The tract at residues 157 to 205 is domain III; it reads SDADSEAEAAAALVSLGYKPQEASRMVSKIAKPGADCETLIREALRAVL.

This sequence belongs to the RuvA family. As to quaternary structure, homotetramer. Forms an RuvA(8)-RuvB(12)-Holliday junction (HJ) complex. HJ DNA is sandwiched between 2 RuvA tetramers; dsDNA enters through RuvA and exits via RuvB. An RuvB hexamer assembles on each DNA strand where it exits the tetramer. Each RuvB hexamer is contacted by two RuvA subunits (via domain III) on 2 adjacent RuvB subunits; this complex drives branch migration. In the full resolvosome a probable DNA-RuvA(4)-RuvB(12)-RuvC(2) complex forms which resolves the HJ.

It localises to the cytoplasm. In terms of biological role, the RuvA-RuvB-RuvC complex processes Holliday junction (HJ) DNA during genetic recombination and DNA repair, while the RuvA-RuvB complex plays an important role in the rescue of blocked DNA replication forks via replication fork reversal (RFR). RuvA specifically binds to HJ cruciform DNA, conferring on it an open structure. The RuvB hexamer acts as an ATP-dependent pump, pulling dsDNA into and through the RuvAB complex. HJ branch migration allows RuvC to scan DNA until it finds its consensus sequence, where it cleaves and resolves the cruciform DNA. The chain is Holliday junction branch migration complex subunit RuvA from Photorhabdus laumondii subsp. laumondii (strain DSM 15139 / CIP 105565 / TT01) (Photorhabdus luminescens subsp. laumondii).